Here is a 20-residue protein sequence, read N- to C-terminus: Cytosol aminopeptidase (20 aa).

S6 carries the post-translational modification Phosphoserine.

It belongs to the peptidase M17 family. In terms of assembly, homohexamer. Requires Zn(2+) as cofactor. Mn(2+) is required as a cofactor.

Its subcellular location is the cytoplasm. It carries out the reaction Release of an N-terminal amino acid, Xaa-|-Yaa-, in which Xaa is preferably Leu, but may be other amino acids including Pro although not Arg or Lys, and Yaa may be Pro. Amino acid amides and methyl esters are also readily hydrolyzed, but rates on arylamides are exceedingly low.. The enzyme catalyses an S-substituted L-cysteinylglycine + H2O = an S-substituted L-cysteine + glycine. It catalyses the reaction L-cysteinylglycine + H2O = L-cysteine + glycine. The catalysed reaction is S-benzyl-L-cysteinylglycine + H2O = S-benzyl-L-cysteine + glycine. It carries out the reaction Release of N-terminal proline from a peptide.. Its function is as follows. Cytosolic metallopeptidase that catalyzes the removal of unsubstituted N-terminal hydrophobic amino acids from various peptides. The presence of Zn(2+) ions is essential for the peptidase activity, and the association with other cofactors can modulate the substrate spectificity of the enzyme. For instance, in the presence of Mn(2+), it displays a specific Cys-Gly hydrolyzing activity of Cys-Gly-S-conjugates. Involved in the metabolism of glutathione and in the degradation of glutathione S-conjugates, which may play a role in the control of the cell redox status. The polypeptide is Cytosol aminopeptidase (Mesocricetus auratus (Golden hamster)).